The primary structure comprises 175 residues: Interleukin-10 (175 aa).

Residues Met1–Ala18 form the signal peptide. 2 disulfide bridges follow: Cys26/Cys122 and Cys76/Cys128. Asn130 carries an N-linked (GlcNAc...) asparagine glycan.

It belongs to the IL-10 family. As to quaternary structure, homodimer. Interacts with IL10RA and IL10RB.

The protein localises to the secreted. Functionally, major immune regulatory cytokine that acts on many cells of the immune system where it has profound anti-inflammatory functions, limiting excessive tissue disruption caused by inflammation. Mechanistically, IL10 binds to its heterotetrameric receptor comprising IL10RA and IL10RB leading to JAK1 and STAT2-mediated phosphorylation of STAT3. In turn, STAT3 translocates to the nucleus where it drives expression of anti-inflammatory mediators. Targets antigen-presenting cells (APCs) such as macrophages and monocytes and inhibits their release of pro-inflammatory cytokines including granulocyte-macrophage colony-stimulating factor /GM-CSF, granulocyte colony-stimulating factor/G-CSF, IL-1 alpha, IL-1 beta, IL-6, IL-8 and TNF-alpha. Also interferes with antigen presentation by reducing the expression of MHC-class II and co-stimulatory molecules, thereby inhibiting their ability to induce T cell activation. In addition, controls the inflammatory response of macrophages by reprogramming essential metabolic pathways including mTOR signaling. In Sus scrofa (Pig), this protein is Interleukin-10 (IL10).